A 122-amino-acid polypeptide reads, in one-letter code: MVQPQSRVKVVDNSGAKEIVCIRVLGKGRNQLSNIGDIIIGVVKEAIPNTPLKKSDIVRAVVVRTRKGLKRKNGIYIRFDDNAAVIVNKENNPRGTRIFGPVARELRDKSFMKIVSLAPEVI.

It belongs to the universal ribosomal protein uL14 family. As to quaternary structure, part of the 50S ribosomal subunit.

The protein resides in the plastid. It is found in the chloroplast. In terms of biological role, binds to 23S rRNA. This Bigelowiella natans (Pedinomonas minutissima) protein is Large ribosomal subunit protein uL14c (rpl14).